Consider the following 590-residue polypeptide: Probable serine/threonine-protein phosphatase PP2A regulatory subunit (590 aa).

HEAT repeat units lie at residues 37 to 73 (LSTI…VLAE), 74 to 111 (QLGN…DKAV), 113 to 150 (SLRK…TSAC), 151 to 188 (GLFS…RAAA), 189 to 227 (AKLG…LLTV), 228 to 266 (ESAI…YMVA), 267 to 305 (EKLI…CAAT), 306 to 344 (QRLQ…QLVK), 349 to 387 (GVIM…LNII), 388 to 426 (SSLD…LAIV), 427 to 465 (QFMP…EAST), 466 to 504 (LIMK…MTCL), 505 to 543 (FCLN…FNAA), and 544 to 582 (KSLK…YFSE).

Belongs to the phosphatase 2A regulatory subunit A family. Part of a complex consisting of a common heterodimeric core enzyme, composed of catalytic subunit let-92 and constant regulatory subunit paa-1, that associates with a variety of regulatory subunits which confer distinct properties to the holoenzyme. Interacts with rsa-1.

The protein resides in the cytoplasm. It localises to the cytoskeleton. The protein localises to the microtubule organizing center. It is found in the centrosome. Its subcellular location is the spindle. Acts as a scaffolding protein for phosphatase let-92 and its regulatory subunits. Probably together with let-92 and regulatory subunit sur-6, regulates centriole duplication, microtubule outgrowth and mitotic spindle stability during early embryonic cell division by preventing the degradation of sas-5 and kinase zyg-1. During vulva development, may play a role with phosphatase let-92 and regulatory subunit sur-6 in the induction of vulva cell precursors by positively regulating let-60/Ras-MAP kinase signaling, probably by promoting lin-45 activation. Plays a positive role in axon guidance probably by inhibiting phosphatase let-92. The sequence is that of Probable serine/threonine-protein phosphatase PP2A regulatory subunit (paa-1) from Caenorhabditis elegans.